A 342-amino-acid polypeptide reads, in one-letter code: Large ribosomal subunit protein uL3 (342 aa).

The tract at residues 1–22 is disordered; it reads MGHRKLSSPRRGSAGLRPRKRA.

This sequence belongs to the universal ribosomal protein uL3 family. As to quaternary structure, part of the 50S ribosomal subunit. Forms a cluster with proteins L14 and L24e.

Its function is as follows. One of the primary rRNA binding proteins, it binds directly near the 3'-end of the 23S rRNA, where it nucleates assembly of the 50S subunit. This chain is Large ribosomal subunit protein uL3, found in Sulfolobus acidocaldarius (strain ATCC 33909 / DSM 639 / JCM 8929 / NBRC 15157 / NCIMB 11770).